Consider the following 352-residue polypeptide: Ion-translocating oxidoreductase complex subunit D (352 aa).

A run of 5 helical transmembrane segments spans residues I20–G40, G42–L62, A78–A109, P123–L143, and I148–A168. T187 carries the post-translational modification FMN phosphoryl threonine. The next 5 membrane-spanning stretches (helical) occupy residues I214–L234, W242–F262, L267–L287, L301–P321, and D322–T342.

This sequence belongs to the NqrB/RnfD family. As to quaternary structure, the complex is composed of six subunits: RsxA, RsxB, RsxC, RsxD, RsxE and RsxG. FMN is required as a cofactor.

It localises to the cell inner membrane. In terms of biological role, part of a membrane-bound complex that couples electron transfer with translocation of ions across the membrane. Required to maintain the reduced state of SoxR. Probably transfers electron from NAD(P)H to SoxR. The protein is Ion-translocating oxidoreductase complex subunit D of Escherichia coli (strain K12).